A 245-amino-acid chain; its full sequence is Phosphoadenosine 5'-phosphosulfate reductase (245 aa).

Catalysis depends on Cys-239, which acts as the Nucleophile; cysteine thiosulfonate intermediate.

This sequence belongs to the PAPS reductase family. CysH subfamily.

The protein localises to the cytoplasm. The catalysed reaction is [thioredoxin]-disulfide + sulfite + adenosine 3',5'-bisphosphate + 2 H(+) = [thioredoxin]-dithiol + 3'-phosphoadenylyl sulfate. It participates in sulfur metabolism; hydrogen sulfide biosynthesis; sulfite from sulfate: step 3/3. Its function is as follows. Catalyzes the formation of sulfite from phosphoadenosine 5'-phosphosulfate (PAPS) using thioredoxin as an electron donor. This Baumannia cicadellinicola subsp. Homalodisca coagulata protein is Phosphoadenosine 5'-phosphosulfate reductase.